The following is a 201-amino-acid chain: Peroxiredoxin-2F, mitochondrial (201 aa).

A mitochondrion-targeting transit peptide spans 1-30 (MAMSILKLRNLSALRSAANSARIGVSSRGF). At Thr37 the chain carries Phosphothreonine. In terms of domain architecture, Thioredoxin spans 37–201 (TDITSAAPGV…TGAEVILGQI (165 aa)). The active-site Cysteine sulfenic acid (-SOH) intermediate is Cys89. Ser149 carries the phosphoserine modification.

Belongs to the peroxiredoxin family. Prx5 subfamily. As to quaternary structure, monomer. Expressed in the whole plant.

Its subcellular location is the mitochondrion matrix. It catalyses the reaction [glutaredoxin]-dithiol + a hydroperoxide = [glutaredoxin]-disulfide + an alcohol + H2O. Its function is as follows. Thiol-specific peroxidase that catalyzes the reduction of hydrogen peroxide and organic hydroperoxides to water and alcohols, respectively. Plays a role in cell protection against oxidative stress by detoxifying peroxides. Reduces preferentially hydrogen peroxide rather than alkyl peroxides. May be involved in mitochondrial redox homeostasis. The chain is Peroxiredoxin-2F, mitochondrial (PRXIIF) from Arabidopsis thaliana (Mouse-ear cress).